A 158-amino-acid polypeptide reads, in one-letter code: UPF0758 protein VC_1786 (158 aa).

The region spanning 37–158 is the MPN domain; the sequence is TFARTENTTE…SVSFAERGWL (122 aa). Residues H108, H110, and D121 each contribute to the Zn(2+) site. Residues 108-121 carry the JAMM motif motif; that stretch reads HNHPSGDPEPSQAD.

This sequence belongs to the UPF0758 family.

The chain is UPF0758 protein VC_1786 from Vibrio cholerae serotype O1 (strain ATCC 39315 / El Tor Inaba N16961).